The following is a 265-amino-acid chain: 2-Cys peroxiredoxin BAS1, chloroplastic (265 aa).

The N-terminal 65 residues, 1–65, are a transit peptide targeting the chloroplast; the sequence is MACVASSTTL…SSTSRRSFAV (65 aa). Positions 73-232 constitute a Thioredoxin domain; the sequence is PLVGNKAPDF…TMRTLQALQY (160 aa). Cys-119 functions as the Cysteine sulfenic acid (-SOH) intermediate in the catalytic mechanism.

Belongs to the peroxiredoxin family. AhpC/Prx1 subfamily. In terms of assembly, homodimer; disulfide-linked, upon oxidation.

Its subcellular location is the plastid. It localises to the chloroplast. It catalyses the reaction a hydroperoxide + [thioredoxin]-dithiol = an alcohol + [thioredoxin]-disulfide + H2O. Its function is as follows. Thiol-specific peroxidase that catalyzes the reduction of hydrogen peroxide and organic hydroperoxides to water and alcohols, respectively. Plays a role in cell protection against oxidative stress by detoxifying peroxides. May be an antioxidant enzyme particularly in the developing shoot and photosynthesizing leaf. In Spinacia oleracea (Spinach), this protein is 2-Cys peroxiredoxin BAS1, chloroplastic (BAS1).